A 257-amino-acid polypeptide reads, in one-letter code: tRNA-cytidine(32) 2-sulfurtransferase (257 aa).

The short motif at 37 to 42 (SGGKDS) is the PP-loop motif element. Residues Cys-112, Cys-115, and Cys-202 each contribute to the [4Fe-4S] cluster site.

Belongs to the TtcA family. Homodimer. Requires Mg(2+) as cofactor. [4Fe-4S] cluster serves as cofactor.

The protein resides in the cytoplasm. It carries out the reaction cytidine(32) in tRNA + S-sulfanyl-L-cysteinyl-[cysteine desulfurase] + AH2 + ATP = 2-thiocytidine(32) in tRNA + L-cysteinyl-[cysteine desulfurase] + A + AMP + diphosphate + H(+). It functions in the pathway tRNA modification. Functionally, catalyzes the ATP-dependent 2-thiolation of cytidine in position 32 of tRNA, to form 2-thiocytidine (s(2)C32). The sulfur atoms are provided by the cysteine/cysteine desulfurase (IscS) system. This chain is tRNA-cytidine(32) 2-sulfurtransferase, found in Geobacter metallireducens (strain ATCC 53774 / DSM 7210 / GS-15).